A 710-amino-acid polypeptide reads, in one-letter code: Polyribonucleotide nucleotidyltransferase (710 aa).

Positions 489 and 495 each coordinate Mg(2+). The KH domain maps to 556 to 615 (PKIDTIKIDVDKIKVVIGKGGETIDKIIAETGVKIDIDDEGNVSIYSSDQAAIDRTKEII). An S1 motif domain is found at 625–693 (GEVYHAKVIR…EKGRVDASMK (69 aa)). The interval 691 to 710 (SMKALIPRPPKPEKKEEKHD) is disordered. Residues 700 to 710 (PKPEKKEEKHD) show a composition bias toward basic and acidic residues.

Belongs to the polyribonucleotide nucleotidyltransferase family. The cofactor is Mg(2+).

It localises to the cytoplasm. It carries out the reaction RNA(n+1) + phosphate = RNA(n) + a ribonucleoside 5'-diphosphate. Functionally, involved in mRNA degradation. Catalyzes the phosphorolysis of single-stranded polyribonucleotides processively in the 3'- to 5'-direction. This is Polyribonucleotide nucleotidyltransferase from Streptococcus pyogenes serotype M4 (strain MGAS10750).